Consider the following 180-residue polypeptide: ATP-dependent protease subunit HslV (180 aa).

Thr-5 is an active-site residue. Residues Gly-161, Cys-164, and Thr-167 each contribute to the Na(+) site.

Belongs to the peptidase T1B family. HslV subfamily. A double ring-shaped homohexamer of HslV is capped on each side by a ring-shaped HslU homohexamer. The assembly of the HslU/HslV complex is dependent on binding of ATP.

It is found in the cytoplasm. The enzyme catalyses ATP-dependent cleavage of peptide bonds with broad specificity.. Its activity is regulated as follows. Allosterically activated by HslU binding. Protease subunit of a proteasome-like degradation complex believed to be a general protein degrading machinery. The sequence is that of ATP-dependent protease subunit HslV from Campylobacter jejuni subsp. doylei (strain ATCC BAA-1458 / RM4099 / 269.97).